Here is a 240-residue protein sequence, read N- to C-terminus: Dihydromonapterin reductase (240 aa).

Y152 acts as the Proton acceptor in catalysis.

The protein belongs to the short-chain dehydrogenases/reductases (SDR) family. FolM subfamily.

It catalyses the reaction (6S)-5,6,7,8-tetrahydrofolate + NADP(+) = 7,8-dihydrofolate + NADPH + H(+). The catalysed reaction is 7,8-dihydromonapterin + NADPH + H(+) = 5,6,7,8-tetrahydromonapterin + NADP(+). Functionally, catalyzes the reduction of dihydromonapterin to tetrahydromonapterin. Also has lower activity with dihydrofolate. The polypeptide is Dihydromonapterin reductase (folM) (Escherichia coli (strain SMS-3-5 / SECEC)).